The sequence spans 372 residues: Ca(2+)/H(+) antiporter (372 aa).

11 helical membrane-spanning segments follow: residues 7–27 (IFLVLLVFCPLSFAAHWLGWG), 29–49 (TTVFILAGLAIVPLAAFMGTA), 62–82 (GGLLNATFGNATELILAYIAL), 94–114 (LTGSIIGNLLLVMGFAVFLGG), 134–154 (MNLGVVAILLPTALQYTSTGV), 162–182 (LSVAVAVVLIGVYLLSLVFSM), 222–242 (LWTGVLLVVTLGVAVESELLV), 251–271 (SLGLTALFTGVIVLPIIGNAA), 294–314 (GSSLQIAFFVAPVLVIVGWAI), 320–340 (LNFNPFELVAVLVAVLIVNSI), and 352–372 (ILLLATYAIVALAFFFHPTLV).

Belongs to the Ca(2+):cation antiporter (CaCA) (TC 2.A.19) family. Cation/proton exchanger (CAX) subfamily.

It is found in the cell inner membrane. Functionally, ca(+)/H(+) antiporter that extrudes calcium in exchange for external protons. Plays an important role in salt tolerance. Does not transport sodium or lithium. This is Ca(2+)/H(+) antiporter from Synechocystis sp. (strain ATCC 27184 / PCC 6803 / Kazusa).